The following is a 556-amino-acid chain: Serine beta-lactamase-like protein LACTB, mitochondrial (556 aa).

A mitochondrion-targeting transit peptide spans 1–117; that stretch reads MYRLLSAVMA…RAIDSSRDLL (117 aa). Residue Ser166 is the Acyl-ester intermediate of the active site. A compositionally biased stretch (basic and acidic residues) spans 249–282; sequence ESDQEKELKEKGGKSNEKNDFAKAKVEQDNETKG. Residues 249–290 are disordered; the sequence is ESDQEKELKEKGGKSNEKNDFAKAKVEQDNETKGRNSKPCKK. N6-succinyllysine is present on residues Lys290 and Lys291. N6-acetyllysine occurs at positions 304 and 349.

The protein belongs to the peptidase S12 family.

Its subcellular location is the mitochondrion. Mitochondrial serine protease that acts as a regulator of mitochondrial lipid metabolism. Acts by decreasing protein levels of PISD, a mitochondrial enzyme that converts phosphatidylserine (PtdSer) to phosphatidylethanolamine (PtdEtn), thereby affecting mitochondrial lipid metabolism. It is unclear whether it acts directly by mediating proteolysis of PISD or by mediating proteolysis of another lipid metabolism protein. In Bos taurus (Bovine), this protein is Serine beta-lactamase-like protein LACTB, mitochondrial.